Reading from the N-terminus, the 473-residue chain is Aspartyl/glutamyl-tRNA(Asn/Gln) amidotransferase subunit B (473 aa).

The protein belongs to the GatB/GatE family. GatB subfamily. In terms of assembly, heterotrimer of A, B and C subunits.

The enzyme catalyses L-glutamyl-tRNA(Gln) + L-glutamine + ATP + H2O = L-glutaminyl-tRNA(Gln) + L-glutamate + ADP + phosphate + H(+). The catalysed reaction is L-aspartyl-tRNA(Asn) + L-glutamine + ATP + H2O = L-asparaginyl-tRNA(Asn) + L-glutamate + ADP + phosphate + 2 H(+). In terms of biological role, allows the formation of correctly charged Asn-tRNA(Asn) or Gln-tRNA(Gln) through the transamidation of misacylated Asp-tRNA(Asn) or Glu-tRNA(Gln) in organisms which lack either or both of asparaginyl-tRNA or glutaminyl-tRNA synthetases. The reaction takes place in the presence of glutamine and ATP through an activated phospho-Asp-tRNA(Asn) or phospho-Glu-tRNA(Gln). This chain is Aspartyl/glutamyl-tRNA(Asn/Gln) amidotransferase subunit B, found in Levilactobacillus brevis (strain ATCC 367 / BCRC 12310 / CIP 105137 / JCM 1170 / LMG 11437 / NCIMB 947 / NCTC 947) (Lactobacillus brevis).